We begin with the raw amino-acid sequence, 376 residues long: Chaperone protein DnaJ (376 aa).

One can recognise a J domain in the interval 5–70 (DYYEILGVSK…QKRAAYDQYG (66 aa)). The CR-type zinc-finger motif lies at 131–209 (GVTKEIRIPT…CHGHGRVERS (79 aa)). Zn(2+) is bound by residues C144, C147, C161, C164, C183, C186, C197, and C200. CXXCXGXG motif repeat units lie at residues 144-151 (CDVCHGSG), 161-168 (CPTCHGSG), 183-190 (CPHCQGRG), and 197-204 (CNKCHGHG).

Belongs to the DnaJ family. As to quaternary structure, homodimer. It depends on Zn(2+) as a cofactor.

The protein localises to the cytoplasm. Participates actively in the response to hyperosmotic and heat shock by preventing the aggregation of stress-denatured proteins and by disaggregating proteins, also in an autonomous, DnaK-independent fashion. Unfolded proteins bind initially to DnaJ; upon interaction with the DnaJ-bound protein, DnaK hydrolyzes its bound ATP, resulting in the formation of a stable complex. GrpE releases ADP from DnaK; ATP binding to DnaK triggers the release of the substrate protein, thus completing the reaction cycle. Several rounds of ATP-dependent interactions between DnaJ, DnaK and GrpE are required for fully efficient folding. Also involved, together with DnaK and GrpE, in the DNA replication of plasmids through activation of initiation proteins. This Escherichia fergusonii (strain ATCC 35469 / DSM 13698 / CCUG 18766 / IAM 14443 / JCM 21226 / LMG 7866 / NBRC 102419 / NCTC 12128 / CDC 0568-73) protein is Chaperone protein DnaJ.